We begin with the raw amino-acid sequence, 288 residues long: Pirin-like protein CC_3178 (288 aa).

It belongs to the pirin family.

This chain is Pirin-like protein CC_3178, found in Caulobacter vibrioides (strain ATCC 19089 / CIP 103742 / CB 15) (Caulobacter crescentus).